Here is a 142-residue protein sequence, read N- to C-terminus: Large ribosomal subunit protein uL13 (142 aa).

It belongs to the universal ribosomal protein uL13 family. As to quaternary structure, part of the 50S ribosomal subunit.

This protein is one of the early assembly proteins of the 50S ribosomal subunit, although it is not seen to bind rRNA by itself. It is important during the early stages of 50S assembly. The sequence is that of Large ribosomal subunit protein uL13 from Burkholderia cenocepacia (strain ATCC BAA-245 / DSM 16553 / LMG 16656 / NCTC 13227 / J2315 / CF5610) (Burkholderia cepacia (strain J2315)).